A 552-amino-acid chain; its full sequence is Gamma-aminobutyric acid receptor subunit alpha-4 (552 aa).

Positions 1–35 (MVSVQKVPAIALCSGVSLALLHFLCLAACLNESPG) are cleaved as a signal peptide. Residues 36-259 (QNSKDEKLCP…FHLRRKMGYF (224 aa)) lie on the Extracellular side of the membrane. Asparagine 47 carries N-linked (GlcNAc...) asparagine glycosylation. Position 100 (arginine 100) interacts with 4-aminobutanoate. N-linked (GlcNAc...) asparagine glycans are attached at residues asparagine 144 and asparagine 157. Threonine 163 is a binding site for 4-aminobutanoate. Cysteine 172 and cysteine 186 are joined by a disulfide. A helical membrane pass occupies residues 260–280 (MIQTYIPCIMTVILSQVSFWI). The Cytoplasmic portion of the chain corresponds to 281-284 (NKES). The chain crosses the membrane as a helical span at residues 285–305 (VPARTVFGITTVLTMTTLSIS). Topologically, residues 306–318 (ARHSLPKVSYATA) are extracellular. The chain crosses the membrane as a helical span at residues 319 to 341 (MDWFIAVCFAFVFSALIEFAAVN). At 342–515 (YFTNIQMQKA…PPPSGSGTSK (174 aa)) the chain is on the cytoplasmic side. Disordered stretches follow at residues 353–480 (KKIS…FGSR) and 492–513 (GAAGNVSATPPPPAPPPSGSGT). Basic and acidic residues predominate over residues 396–406 (SESDVKSRTEV). Residues 407–422 (GNHSSKTSAVQESSEA) are compositionally biased toward polar residues. Low complexity predominate over residues 445-458 (SAAARGLSSAASPS). A compositionally biased stretch (pro residues) spans 500-509 (TPPPPAPPPS). Residues 516–538 (IDKYARILFPVTFGAFNMVYWVV) traverse the membrane as a helical segment. Residues 539–552 (YLSKDTMEKSESLM) lie on the Extracellular side of the membrane.

It belongs to the ligand-gated ion channel (TC 1.A.9) family. Gamma-aminobutyric acid receptor (TC 1.A.9.5) subfamily. GABRA4 sub-subfamily. In terms of assembly, heteropentamer, formed by a combination of alpha (GABRA1-6), beta (GABRB1-3), gamma (GABRG1-3), delta (GABRD), epsilon (GABRE), rho (GABRR1-3), pi (GABRP) and theta (GABRQ) chains, each subunit exhibiting distinct physiological and pharmacological properties. Expressed in the brain.

Its subcellular location is the cell membrane. The protein resides in the postsynaptic cell membrane. The catalysed reaction is chloride(in) = chloride(out). With respect to regulation, potentiated by gaboxadol. Potentiated by histamine. Its function is as follows. Alpha subunit of the heteropentameric ligand-gated chloride channel gated by gamma-aminobutyric acid (GABA), a major inhibitory neurotransmitter in the brain. GABA-gated chloride channels, also named GABA(A) receptors (GABAAR), consist of five subunits arranged around a central pore and contain GABA active binding site(s) located at the alpha and beta subunit interface(s). Alpha-4/GABRA4 subunit often assembles with delta or gamma-2 subunits, in combination with beta subunits. When activated by GABA, GABAARs selectively allow the flow of chloride anions across the cell membrane down their electrochemical gradient. GABAARs containing alpha-4 are predominantly extrasynaptic, contributing to tonic inhibition in dentate granule cells and thalamic relay neurons. Extrasynaptic alpha-4-containing GABAARs control levels of excitability and network activity. GABAAR containing alpha-4-beta-3-delta subunits can simultaneously bind GABA and histamine where histamine binds at the interface of two neighboring beta subunits, which may be involved in the regulation of sleep and wakefulness. This chain is Gamma-aminobutyric acid receptor subunit alpha-4, found in Mus musculus (Mouse).